The primary structure comprises 412 residues: 8-amino-7-oxononanoate synthase (412 aa).

106–107 (GY) serves as a coordination point for pyridoxal 5'-phosphate. Histidine 131 is a binding site for substrate. Positions 187, 219, and 247 each coordinate pyridoxal 5'-phosphate. Lysine 250 bears the N6-(pyridoxal phosphate)lysine mark. Threonine 370 serves as a coordination point for substrate.

Belongs to the class-II pyridoxal-phosphate-dependent aminotransferase family. BioF subfamily. Homodimer. Pyridoxal 5'-phosphate is required as a cofactor.

The catalysed reaction is 6-carboxyhexanoyl-[ACP] + L-alanine + H(+) = (8S)-8-amino-7-oxononanoate + holo-[ACP] + CO2. It participates in cofactor biosynthesis; biotin biosynthesis. In terms of biological role, 8-amino-7-oxononanoate synthase; part of the cluster involved in the biosynthesis of biotin (also known as vitamin B8 or vitamin H), a water-soluble vitamin that functions as a prosthetic group of many carboxylases, such as acetyl-CoA carboxylase and pyruvate carboxylase. Catalyzes the decarboxylative condensation of pimeloyl-[acyl-carrier protein] and L-alanine to produce 8-amino-7-oxononanoate (AON). The protein is 8-amino-7-oxononanoate synthase of Emericella nidulans (strain FGSC A4 / ATCC 38163 / CBS 112.46 / NRRL 194 / M139) (Aspergillus nidulans).